A 263-amino-acid polypeptide reads, in one-letter code: Small ribosomal subunit protein eS4 (263 aa).

The S4 RNA-binding domain occupies 42–104; sequence LPLIIFLRNR…TGEHFRLVYD (63 aa).

Belongs to the eukaryotic ribosomal protein eS4 family. Component of the small ribosomal subunit.

It is found in the cytoplasm. Functionally, component of the small ribosomal subunit. The ribosome is a large ribonucleoprotein complex responsible for the synthesis of proteins in the cell. This chain is Small ribosomal subunit protein eS4 (rps4), found in Xenopus tropicalis (Western clawed frog).